The sequence spans 672 residues: tRNA 5-methylaminomethyl-2-thiouridine biosynthesis bifunctional protein MnmC (672 aa).

Residues 1-243 form a tRNA (mnm(5)s(2)U34)-methyltransferase region; the sequence is MTSIKNAELG…KREMIAGSME (243 aa). An FAD-dependent cmnm(5)s(2)U34 oxidoreductase region spans residues 269-672; sequence IGGGIASAAL…LRKGKAITEL (404 aa).

It in the N-terminal section; belongs to the methyltransferase superfamily. tRNA (mnm(5)s(2)U34)-methyltransferase family. The protein in the C-terminal section; belongs to the DAO family. FAD serves as cofactor.

The protein localises to the cytoplasm. The enzyme catalyses 5-aminomethyl-2-thiouridine(34) in tRNA + S-adenosyl-L-methionine = 5-methylaminomethyl-2-thiouridine(34) in tRNA + S-adenosyl-L-homocysteine + H(+). Functionally, catalyzes the last two steps in the biosynthesis of 5-methylaminomethyl-2-thiouridine (mnm(5)s(2)U) at the wobble position (U34) in tRNA. Catalyzes the FAD-dependent demodification of cmnm(5)s(2)U34 to nm(5)s(2)U34, followed by the transfer of a methyl group from S-adenosyl-L-methionine to nm(5)s(2)U34, to form mnm(5)s(2)U34. The chain is tRNA 5-methylaminomethyl-2-thiouridine biosynthesis bifunctional protein MnmC from Vibrio campbellii (strain ATCC BAA-1116).